The primary structure comprises 129 residues: Small ribosomal subunit protein uS12 (129 aa).

Aspartate 89 is subject to 3-methylthioaspartic acid. Residues 110 to 129 (RKQGRSRYGAPRKQVVATKK) are disordered.

Belongs to the universal ribosomal protein uS12 family. As to quaternary structure, part of the 30S ribosomal subunit. Contacts proteins S8 and S17. May interact with IF1 in the 30S initiation complex.

Functionally, with S4 and S5 plays an important role in translational accuracy. In terms of biological role, interacts with and stabilizes bases of the 16S rRNA that are involved in tRNA selection in the A site and with the mRNA backbone. Located at the interface of the 30S and 50S subunits, it traverses the body of the 30S subunit contacting proteins on the other side and probably holding the rRNA structure together. The combined cluster of proteins S8, S12 and S17 appears to hold together the shoulder and platform of the 30S subunit. In Rickettsia bellii (strain OSU 85-389), this protein is Small ribosomal subunit protein uS12.